We begin with the raw amino-acid sequence, 337 residues long: Secreted effector protein EspF(U) (337 aa).

5 consecutive repeat copies span residues 96 to 142 (IKPA…AEHG), 143 to 189 (IQPA…AEHG), 190 to 236 (IQPA…AEHG), 237 to 283 (IQPA…AEHG), and 284 to 330 (IQPA…AEHG). A 5 X 48 AA approximate tandem repeats region spans residues 96–330 (IKPARSMAEH…RLMQHLAEHG (235 aa)). Residues 291–312 (AEHIPPAPNWPAPTPPVQNEQS) are disordered. The span at 295 to 306 (PPAPNWPAPTPP) shows a compositional bias: pro residues.

Belongs to the EspF(U)/TccP family. In terms of assembly, interacts with host BAIAP2 and host WASL/N-WASP. Can also interact with host proteins BAIAP2L1 and WAS/WASP.

It localises to the secreted. Its subcellular location is the host cytoplasm. Required for efficient pedestal formation in host epithelial cells during infection. Acts as an intermediate between Tir (via host BAIAP2) and host WASL/N-WASP. Directly binds and activates WASL/N-WASP, which stimulates actin polymerization and leads to the formation of actin pedestals at the sites of bacterial adhesion. This chain is Secreted effector protein EspF(U) (espF(U)), found in Escherichia coli O157:H7.